A 289-amino-acid polypeptide reads, in one-letter code: MAHDQLYRYLFENYAVRGELVTVNETYQRILTNHDYPSAVQTLLGEMLVATSLLTATLKFSGDITVQLQGDGPLKLAVINGNHQQQMRGVARLQGDIAPGSSLKEMVGNGYLVITITPTEGERYQGVVGLEGETVAECLESYFQQSEQLPTRLFIRTGQHEGKQAAAGMLLQVLPAQDADRDDFDHLAQLTTTVKGEELFSLPATEVLYRLYHQEEVTVYEPQDVEFRCHCSRDRCADALMTLSDQEVNEMIEQDGEIDMHCDYCGTHYLFNSLDIRAIRHDSSGNLLH.

2 disulfide bridges follow: cysteine 229–cysteine 231 and cysteine 262–cysteine 265.

Belongs to the HSP33 family. Under oxidizing conditions two disulfide bonds are formed involving the reactive cysteines. Under reducing conditions zinc is bound to the reactive cysteines and the protein is inactive.

Its subcellular location is the cytoplasm. Its function is as follows. Redox regulated molecular chaperone. Protects both thermally unfolding and oxidatively damaged proteins from irreversible aggregation. Plays an important role in the bacterial defense system toward oxidative stress. The protein is 33 kDa chaperonin of Pectobacterium carotovorum subsp. carotovorum (strain PC1).